Consider the following 729-residue polypeptide: Solute carrier family 15 member 2 (729 aa).

The tract at residues 1-34 is disordered; sequence MNPFQQNESKETLFSPVSTEETPPRLSSPAKKTP. Residues 1–57 are Cytoplasmic-facing; sequence MNPFQQNESKETLFSPVSTEETPPRLSSPAKKTPPKICGSNYPLSIAFIVVNEFCER. Residue Ser9 is modified to Phosphoserine. Thr12 is modified (phosphothreonine). Position 28 is a phosphoserine (Ser28). A helical transmembrane segment spans residues 58 to 78; that stretch reads FSYYGMKAVLTLYFLYFLHWN. Residues 79-87 lie on the Extracellular side of the membrane; the sequence is EDTSTSVYH. The chain crosses the membrane as a helical span at residues 88–108; it reads AFSSLCYFTPILGAAIADSWL. At 109–113 the chain is on the cytoplasmic side; the sequence is GKFKT. Residues 114 to 134 traverse the membrane as a helical segment; that stretch reads IIYLSLVNVLGHVIKSLSAFP. Residues 135 to 139 lie on the Extracellular side of the membrane; it reads ILGGK. Residues 140 to 160 form a helical membrane-spanning segment; sequence VVHTVLSLVGLCLIALGTGGI. Topologically, residues 161-183 are cytoplasmic; that stretch reads KPCVAAFGGDQFEEKHAEERTRY. Residues 184 to 204 traverse the membrane as a helical segment; the sequence is FSGFYLAINAGSLISTFITPM. Residues 205–217 lie on the Extracellular side of the membrane; the sequence is LRGDVQCFGEDCY. A helical transmembrane segment spans residues 218–238; it reads ALAFGVPGLLMVIALVVFAMG. Over 239 to 295 the chain is Cytoplasmic; sequence SKMYKKPPPEGNIVAQVVKCIWFAISNRFKNRSEDIPKRQHWLDWAAEKYPKQLIMD. Residues 296–316 form a helical membrane-spanning segment; the sequence is VKTLTRVLFLYIPLPMFWALL. The Extracellular portion of the chain corresponds to 317–343; sequence DQQGSRWTLQATKMNGNLGFFVLQPDQ. The chain crosses the membrane as a helical span at residues 344–364; sequence MQVLNPLLVLIFIPLFDLVIY. Residues 365-380 are Cytoplasmic-facing; that stretch reads RLISKCGINFTSLRKM. A helical transmembrane segment spans residues 381-401; the sequence is AVGMVLACLAFAAAATVEIKI. Over 402–611 the chain is Extracellular; it reads NEMAPPQPGS…PANKVSIAWQ (210 aa). The segment at 402 to 611 is extracellular domain (ECD); the sequence is NEMAPPQPGS…PANKVSIAWQ (210 aa). Residues Asn435, Asn472, Asn508, Asn528, and Asn587 are each glycosylated (N-linked (GlcNAc...) asparagine). A helical transmembrane segment spans residues 612-632; the sequence is LPQYALVTAGEVMFSVTGLEF. The Cytoplasmic segment spans residues 633–643; it reads SYSQAPSSMKS. Residues 644–664 form a helical membrane-spanning segment; sequence VLQAAWLLTVAIGNIIVLVVA. Over 665–674 the chain is Extracellular; sequence QFSGLVQWAE. A helical transmembrane segment spans residues 675-695; that stretch reads FVLFSCLLLVVCLIFSIMGYY. Over 696–729 the chain is Cytoplasmic; that stretch reads YIPIKSEDIQGPEDKQIPHMQGNMINLETKKTKL.

It belongs to the major facilitator superfamily. Proton-dependent oligopeptide transporter (POT/PTR) (TC 2.A.17) family. Interacts (via extracellular domain region) with trypsin. In terms of tissue distribution, strongly expressed in kidney. Also detected in brain, lung, liver and heart.

The protein resides in the apical cell membrane. It localises to the cytoplasmic vesicle. Its subcellular location is the phagosome membrane. It is found in the cell membrane. The catalysed reaction is a dipeptide(out) + 2 H(+)(out) = a dipeptide(in) + 2 H(+)(in). It catalyses the reaction N-acetyl-D-muramoyl-L-alanyl-D-isoglutamine(out) + 3 H(+)(out) = N-acetyl-D-muramoyl-L-alanyl-D-isoglutamine(in) + 3 H(+)(in). It carries out the reaction glycyl-L-leucine(out) + 2 H(+)(out) = glycyl-L-leucine(in) + 2 H(+)(in). The enzyme catalyses glycyl-L-lysine(out) + 2 H(+)(out) = glycyl-L-lysine(in) + 2 H(+)(in). The catalysed reaction is glycyl-L-glutamate(out) + 3 H(+)(out) = glycyl-L-glutamate(in) + 3 H(+)(in). It catalyses the reaction L-alanyl-L-alanine(out) + 2 H(+)(out) = L-alanyl-L-alanine(in) + 2 H(+)(in). It carries out the reaction an L-amino acid tripeptide(out) + 2 H(+)(out) = an L-amino acid tripeptide(in) + 2 H(+)(in). The enzyme catalyses carnosine(out) + 2 H(+)(out) = carnosine(in) + 2 H(+)(in). In terms of biological role, proton-coupled amino-acid transporter that transports oligopeptides of 2 to 4 amino acids with a preference for dipeptides. Transports neutral and anionic dipeptides with a proton to peptide stoichiometry of 2:1 or 3:1. In kidney, involved in the absorption of circulating di- and tripeptides from the glomerular filtrate. Can also transport beta-lactam antibiotics, such as the aminocephalosporin cefadroxil, and other antiviral and anticancer drugs. Transports the dipeptide-like aminopeptidase inhibitor bestatin. Also able to transport carnosine. Involved in innate immunity by promoting the detection of microbial pathogens by NOD-like receptors (NLRs). Mediates transport of bacterial peptidoglycans across the plasma membrane or, in macrophages, the phagosome membrane: catalyzes the transport of certain bacterial peptidoglycans, such as muramyl dipeptide (MDP), the NOD2 ligand. The sequence is that of Solute carrier family 15 member 2 from Oryctolagus cuniculus (Rabbit).